A 149-amino-acid polypeptide reads, in one-letter code: Putative eggshell protein (149 aa).

A run of 6 repeats spans residues 1-5 (YGYDK), 6-10 (YGYDK), 11-15 (YGYDK), 16-20 (YGYDK), 21-25 (YGYDK), and 26-30 (YGYEK). Residues 1–64 (YGYDKYGYDK…YGYDKYGDDK (64 aa)) form a 13 X 5 AA approximate tandem repeats of Y-G-Y-[DE]-K region. The 7; truncated repeat unit spans residues 31–34 (GYDK). 3 tandem repeats follow at residues 35 to 39 (YGYDK), 40 to 44 (YGYEK), and 45 to 49 (YGYDK). An 11; approximate repeat occupies 50–54 (YGNEK). Residues 55–59 (YGYDK) form repeat 12. A 13; approximate repeat occupies 60–64 (YGDDK). Over residues 105–124 (YRKDHDKHDHDEHDHHDDHH) the composition is skewed to basic and acidic residues. Residues 105–149 (YRKDHDKHDHDEHDHHDDHHDHRHHHHEHDHHHHHEHDHKNGKGY) form a disordered region. Positions 125–141 (DHRHHHHEHDHHHHHEH) are enriched in basic residues.

This Schistosoma mansoni (Blood fluke) protein is Putative eggshell protein.